A 351-amino-acid chain; its full sequence is Quinolinate phosphoribosyltransferase [decarboxylating] 2a, mitochondrial (351 aa).

Substrate contacts are provided by residues R142, 173–175 (TRK), R197, K207, E240, D267, 299–301 (SGN), and 320–322 (SGA).

It belongs to the NadC/ModD family. Expressed in roots and flowers.

Its subcellular location is the mitochondrion. It catalyses the reaction nicotinate beta-D-ribonucleotide + CO2 + diphosphate = quinolinate + 5-phospho-alpha-D-ribose 1-diphosphate + 2 H(+). Its pathway is alkaloid biosynthesis; nicotine biosynthesis. It functions in the pathway cofactor biosynthesis; NAD(+) biosynthesis; nicotinate D-ribonucleotide from quinolinate: step 1/1. Involved in the biosynthesis of pyridine alkaloid natural products, leading mainly to the production of anabasine, anatabine, nicotine and nornicotine, effective deterrents against herbivores with antiparasitic and pesticide properties (neurotoxins); nornicotine serves as the precursor in the synthesis of the carcinogen compound N'-nitrosonornicotine (NNN). Involved in the catabolism of quinolinic acid (QA). This Nicotiana tabacum (Common tobacco) protein is Quinolinate phosphoribosyltransferase [decarboxylating] 2a, mitochondrial.